Consider the following 414-residue polypeptide: Probable peptidoglycan glycosyltransferase FtsW (414 aa).

Residues Met-1–Arg-12 lie on the Cytoplasmic side of the membrane. Residues Leu-13 to Ser-33 traverse the membrane as a helical segment. Residues Arg-34–Thr-47 lie on the Periplasmic side of the membrane. A helical membrane pass occupies residues Leu-48–Met-68. The Cytoplasmic portion of the chain corresponds to Pro-69–Gly-86. Residues Val-87–Trp-107 form a helical membrane-spanning segment. At Gln-108–Ser-111 the chain is on the periplasmic side. Residues Ala-112–Val-132 form a helical membrane-spanning segment. Topologically, residues Lys-133–Asn-174 are cytoplasmic. The helical transmembrane segment at Leu-175–Ala-194 threads the bilayer. Topologically, residues Gln-195–Asp-197 are periplasmic. The helical transmembrane segment at Leu-198–Ala-217 threads the bilayer. Position 218 (Lys-218) is a topological domain, cytoplasmic. A helical transmembrane segment spans residues Leu-219 to Ala-239. At Glu-240 to Ala-301 the chain is on the periplasmic side. Residues Ile-302–Val-322 form a helical membrane-spanning segment. Residues Ala-323 to Gly-342 lie on the Cytoplasmic side of the membrane. The helical transmembrane segment at Phe-343–Ala-363 threads the bilayer. At Ala-364–Thr-373 the chain is on the periplasmic side. A helical membrane pass occupies residues Leu-374–Leu-394. Residues Leu-395–Arg-414 are Cytoplasmic-facing.

This sequence belongs to the SEDS family. FtsW subfamily.

The protein resides in the cell inner membrane. The catalysed reaction is [GlcNAc-(1-&gt;4)-Mur2Ac(oyl-L-Ala-gamma-D-Glu-L-Lys-D-Ala-D-Ala)](n)-di-trans,octa-cis-undecaprenyl diphosphate + beta-D-GlcNAc-(1-&gt;4)-Mur2Ac(oyl-L-Ala-gamma-D-Glu-L-Lys-D-Ala-D-Ala)-di-trans,octa-cis-undecaprenyl diphosphate = [GlcNAc-(1-&gt;4)-Mur2Ac(oyl-L-Ala-gamma-D-Glu-L-Lys-D-Ala-D-Ala)](n+1)-di-trans,octa-cis-undecaprenyl diphosphate + di-trans,octa-cis-undecaprenyl diphosphate + H(+). It participates in cell wall biogenesis; peptidoglycan biosynthesis. In terms of biological role, peptidoglycan polymerase that is essential for cell division. The sequence is that of Probable peptidoglycan glycosyltransferase FtsW from Escherichia coli O157:H7.